The chain runs to 181 residues: Peptide deformylase (181 aa).

The Fe cation site is built by C99 and H141. Residue E142 is part of the active site. H145 contributes to the Fe cation binding site.

Belongs to the polypeptide deformylase family. It depends on Fe(2+) as a cofactor.

It catalyses the reaction N-terminal N-formyl-L-methionyl-[peptide] + H2O = N-terminal L-methionyl-[peptide] + formate. Functionally, removes the formyl group from the N-terminal Met of newly synthesized proteins. Requires at least a dipeptide for an efficient rate of reaction. N-terminal L-methionine is a prerequisite for activity but the enzyme has broad specificity at other positions. In Chlamydia muridarum (strain MoPn / Nigg), this protein is Peptide deformylase.